The primary structure comprises 342 residues: Cytosolic Fe-S cluster assembly factor NBP35 (342 aa).

[4Fe-4S] cluster-binding residues include cysteine 33, cysteine 47, cysteine 50, and cysteine 56. An ATP-binding site is contributed by 86 to 93; that stretch reads GKGGVGKS. Residues cysteine 259 and cysteine 262 each coordinate [4Fe-4S] cluster.

It belongs to the Mrp/NBP35 ATP-binding proteins family. NUBP1/NBP35 subfamily. Heterotetramer of 2 NBP35 and 2 CFD1 chains. [4Fe-4S] cluster is required as a cofactor.

It localises to the cytoplasm. Its function is as follows. Component of the cytosolic iron-sulfur (Fe/S) protein assembly (CIA) machinery. Required for maturation of extramitochondrial Fe-S proteins. The NBP35-CFD1 heterotetramer forms a Fe-S scaffold complex, mediating the de novo assembly of an Fe-S cluster and its transfer to target apoproteins. This chain is Cytosolic Fe-S cluster assembly factor NBP35, found in Gibberella zeae (strain ATCC MYA-4620 / CBS 123657 / FGSC 9075 / NRRL 31084 / PH-1) (Wheat head blight fungus).